The primary structure comprises 299 residues: Leucine zipper transcription factor-like protein 1 (299 aa).

Positions 96–299 (LKLQTDISEL…KRLAKYESED (204 aa)) form a coiled coil. Residues 145–299 (GTTELLNKEI…KRLAKYESED (155 aa)) form an interaction with BSS9 region.

This sequence belongs to the LZTFL1 family. In terms of assembly, self-associates. Interacts with BBS9; the interaction mediates the association of LZTL1 with the BBsome complex and regulates BBSome ciliary trafficking. Highly expressed in testis. Expressed in brain, cerebellum, eye, heart, kidney, liver, lung and trachea. In small intestine, graded expression along the crypt-villus axis with high levels in the villus apex and lower levels in the crypt stem cells (at protein level). Not expressed in skeletal muscle and white adipose tissue.

The protein resides in the cytoplasm. Regulates ciliary localization of the BBSome complex. Together with the BBSome complex, controls SMO ciliary trafficking and contributes to the sonic hedgehog (SHH) pathway regulation. May play a role in neurite outgrowth. May have tumor suppressor function. This chain is Leucine zipper transcription factor-like protein 1 (Lztfl1), found in Mus musculus (Mouse).